The chain runs to 325 residues: Beta-ketoacyl-[acyl-carrier-protein] synthase III (325 aa).

Residues Cys-112 and His-250 contribute to the active site. An ACP-binding region spans residues 251-255 (QANSR). The active site involves Asn-280.

The protein belongs to the thiolase-like superfamily. FabH family. In terms of assembly, homodimer.

The protein localises to the cytoplasm. The enzyme catalyses malonyl-[ACP] + acetyl-CoA + H(+) = 3-oxobutanoyl-[ACP] + CO2 + CoA. It functions in the pathway lipid metabolism; fatty acid biosynthesis. Catalyzes the condensation reaction of fatty acid synthesis by the addition to an acyl acceptor of two carbons from malonyl-ACP. Catalyzes the first condensation reaction which initiates fatty acid synthesis and may therefore play a role in governing the total rate of fatty acid production. Possesses both acetoacetyl-ACP synthase and acetyl transacylase activities. Its substrate specificity determines the biosynthesis of branched-chain and/or straight-chain of fatty acids. This Lactococcus lactis subsp. lactis (strain IL1403) (Streptococcus lactis) protein is Beta-ketoacyl-[acyl-carrier-protein] synthase III.